A 56-amino-acid polypeptide reads, in one-letter code: MLNFLLQNTFVLWSNFILCKLPEAYAVFDPIVDVMPVIPVFFFLLAFVWQAAVSFR.

Positions 1-19 (MLNFLLQNTFVLWSNFILC) are excised as a propeptide. A helical membrane pass occupies residues 35–55 (MPVIPVFFFLLAFVWQAAVSF).

This sequence belongs to the PsbK family. As to quaternary structure, PSII is composed of 1 copy each of membrane proteins PsbA, PsbB, PsbC, PsbD, PsbE, PsbF, PsbH, PsbI, PsbJ, PsbK, PsbL, PsbM, PsbT, PsbX, PsbY, PsbZ, Psb30/Ycf12, at least 3 peripheral proteins of the oxygen-evolving complex and a large number of cofactors. It forms dimeric complexes.

Its subcellular location is the plastid. It is found in the chloroplast thylakoid membrane. One of the components of the core complex of photosystem II (PSII). PSII is a light-driven water:plastoquinone oxidoreductase that uses light energy to abstract electrons from H(2)O, generating O(2) and a proton gradient subsequently used for ATP formation. It consists of a core antenna complex that captures photons, and an electron transfer chain that converts photonic excitation into a charge separation. This Welwitschia mirabilis (Tree tumbo) protein is Photosystem II reaction center protein K.